Reading from the N-terminus, the 238-residue chain is Heme oxygenase 1 (238 aa).

This sequence belongs to the heme oxygenase family.

The catalysed reaction is heme b + 3 reduced [NADPH--hemoprotein reductase] + 3 O2 = biliverdin IXalpha + CO + Fe(2+) + 3 oxidized [NADPH--hemoprotein reductase] + 3 H2O + H(+). Functionally, catalyzes the opening of the heme ring with the release of iron. Key enzyme in the synthesis of the chromophoric part of the photosynthetic antennae. Upon overexpression in E.coli with PCB:ferredoxin oxidoreductase, CpeS and either CpcB or PecB permits synthesis of phycocyanin-coupled CpcB or PecB. The polypeptide is Heme oxygenase 1 (pbsA1) (Nostoc sp. (strain PCC 7120 / SAG 25.82 / UTEX 2576)).